The primary structure comprises 147 residues: Protein phosphatase 1 regulatory subunit 14B (147 aa).

Positions 1 to 15 (MADSGPAGGAALAAP) are enriched in low complexity. The tract at residues 1-55 (MADSGPAGGAALAAPAPGPGSGSTGPRVYFQSPPGAAGEGPGGADDDGPVRRQGK) is disordered. Alanine 2 is subject to N-acetylalanine. Phosphoserine is present on serine 21. Tyrosine 29 carries the post-translational modification Phosphotyrosine. At serine 32 the chain carries Phosphoserine. A Phosphothreonine modification is found at threonine 57. The stretch at 61-103 (DRKELRKRLNLEEWILEQLTRLYDCQEEEIPELEIDVDELLDM) forms a coiled coil.

The protein belongs to the PP1 inhibitor family. Post-translationally, phosphorylated primarily on Thr-57 by PKC (in vitro). An unknown Ser is also phosphorylated by PKC (in vitro). As to expression, ubiquitous. Highly expressed in testis. Detected at low levels in the other tissues tested. Highly expressed in cardiac muscle, bladder and aorta (at protein level).

Its subcellular location is the cytoplasm. Functionally, inhibitor of PPP1CA. Has over 50-fold higher inhibitory activity when phosphorylated. The polypeptide is Protein phosphatase 1 regulatory subunit 14B (Ppp1r14b) (Mus musculus (Mouse)).